The sequence spans 240 residues: Ribosomal RNA large subunit methyltransferase E (240 aa).

Over residues 1–20 (MSKAGGNKGGSRTGGRGGAG) the composition is skewed to gly residues. The interval 1–40 (MSKAGGNKGGSRTGGRGGAGSSNLHVRVKKKAGTTKESSR) is disordered. Positions 92, 94, 115, 131, and 155 each coordinate S-adenosyl-L-methionine. K195 functions as the Proton acceptor in the catalytic mechanism.

The protein belongs to the class I-like SAM-binding methyltransferase superfamily. RNA methyltransferase RlmE family.

It is found in the cytoplasm. It catalyses the reaction uridine(2552) in 23S rRNA + S-adenosyl-L-methionine = 2'-O-methyluridine(2552) in 23S rRNA + S-adenosyl-L-homocysteine + H(+). Specifically methylates the uridine in position 2552 of 23S rRNA at the 2'-O position of the ribose in the fully assembled 50S ribosomal subunit. The protein is Ribosomal RNA large subunit methyltransferase E of Brucella ovis (strain ATCC 25840 / 63/290 / NCTC 10512).